The sequence spans 362 residues: Anthranilate phosphoribosyltransferase 2 (362 aa).

5-phospho-alpha-D-ribose 1-diphosphate is bound by residues glycine 103, 106–107 (GD), threonine 111, 113–116 (NIST), 131–139 (KHGNRSASS), and serine 143. Glycine 103 contributes to the anthranilate binding site. Serine 115 serves as a coordination point for Mg(2+). Residue asparagine 134 coordinates anthranilate. Arginine 189 is a binding site for anthranilate. Aspartate 248 and glutamate 249 together coordinate Mg(2+).

It belongs to the anthranilate phosphoribosyltransferase family. Homodimer. The cofactor is Mg(2+).

The enzyme catalyses N-(5-phospho-beta-D-ribosyl)anthranilate + diphosphate = 5-phospho-alpha-D-ribose 1-diphosphate + anthranilate. Its pathway is amino-acid biosynthesis; L-tryptophan biosynthesis; L-tryptophan from chorismate: step 2/5. Functionally, catalyzes the transfer of the phosphoribosyl group of 5-phosphorylribose-1-pyrophosphate (PRPP) to anthranilate to yield N-(5'-phosphoribosyl)-anthranilate (PRA). The sequence is that of Anthranilate phosphoribosyltransferase 2 from Nostoc sp. (strain PCC 7120 / SAG 25.82 / UTEX 2576).